The following is a 472-amino-acid chain: 3-isopropylmalate dehydratase large subunit (472 aa).

[4Fe-4S] cluster contacts are provided by Cys-351, Cys-412, and Cys-415.

The protein belongs to the aconitase/IPM isomerase family. LeuC type 1 subfamily. Heterodimer of LeuC and LeuD. It depends on [4Fe-4S] cluster as a cofactor.

It carries out the reaction (2R,3S)-3-isopropylmalate = (2S)-2-isopropylmalate. Its pathway is amino-acid biosynthesis; L-leucine biosynthesis; L-leucine from 3-methyl-2-oxobutanoate: step 2/4. In terms of biological role, catalyzes the isomerization between 2-isopropylmalate and 3-isopropylmalate, via the formation of 2-isopropylmaleate. This is 3-isopropylmalate dehydratase large subunit from Marinobacter nauticus (strain ATCC 700491 / DSM 11845 / VT8) (Marinobacter aquaeolei).